Reading from the N-terminus, the 448-residue chain is Velvet complex subunit 2 (448 aa).

Disordered regions lie at residues 1–153 (MNSA…SKIE) and 224–306 (EPGT…NGYG). Residues 15 to 34 (PGPAYSSSAPPPIHTYQQHQ) are compositionally biased toward low complexity. 2 stretches are compositionally biased toward pro residues: residues 35–44 (HPPPPLPPPS) and 52–61 (PPLPPPPSAP). The segment covering 96–107 (APYQQSQPSQYP) has biased composition (low complexity). Residues 116 to 132 (VPPPSQHDEPPPPPSSG) are compositionally biased toward pro residues. One can recognise a Velvet domain in the interval 155 to 431 (GSGWKYSLDV…ANQGIKIPIR (277 aa)). Residues 260-292 (QQSYGPAPSYPPSSSYGPPQQYYPRHSGYSAEP) show a composition bias toward low complexity.

Belongs to the velvet family. VelB subfamily. As to quaternary structure, component of the heterotrimeric velvet complex composed of LAE1, VE1 and VELB; VE1 acting as a bridging protein between LAE1 and VEL2. Interacts with VE1. Forms a heterodimeric complex with VOS1; the formation of the VELB-VOS1 complex is light-dependent.

It localises to the nucleus. Its subcellular location is the cytoplasm. Component of the velvet transcription factor complex that controls sexual/asexual developmental ratio in response to light, promoting sexual development in the darkness while stimulating asexual sporulation under illumination. The velvet complex acts as a global regulator for secondary metabolite gene expression. Component of the VELB-VOS1 heterodimeric complex that plays a dual role in activating genes associated with spore maturation and repressing certain development-associated genes. The VELB-VOS1 complex binds DNA through the DNA-binding domain of VOS1 that recognizes an 11-nucleotide consensus sequence 5'-CTGGCCGCGGC-3' consisting of two motifs in the promoters of key developmental regulatory genes. Controls the expression of the fumonisins gene cluster. Involved in cell wall integrity, cell surface hydrophobicity, hyphal polarity and conidiation pattern. Involved in oxidative stress resistance by positively regulating the transcription of the catalase-encoding gene CAT2. In Gibberella moniliformis (strain M3125 / FGSC 7600) (Maize ear and stalk rot fungus), this protein is Velvet complex subunit 2.